The following is a 470-amino-acid chain: Glutamate--tRNA ligase (470 aa).

A 'HIGH' region motif is present at residues 9–19 (PSPTGYLHVGG). The short motif at 236–240 (RLSKR) is the 'KMSKS' region element. ATP is bound at residue lysine 239.

This sequence belongs to the class-I aminoacyl-tRNA synthetase family. Glutamate--tRNA ligase type 1 subfamily. Monomer.

The protein localises to the cytoplasm. The enzyme catalyses tRNA(Glu) + L-glutamate + ATP = L-glutamyl-tRNA(Glu) + AMP + diphosphate. Its function is as follows. Catalyzes the attachment of glutamate to tRNA(Glu) in a two-step reaction: glutamate is first activated by ATP to form Glu-AMP and then transferred to the acceptor end of tRNA(Glu). In Colwellia psychrerythraea (strain 34H / ATCC BAA-681) (Vibrio psychroerythus), this protein is Glutamate--tRNA ligase.